The following is a 364-amino-acid chain: Aminomethyltransferase (364 aa).

Belongs to the GcvT family. The glycine cleavage system is composed of four proteins: P, T, L and H.

The enzyme catalyses N(6)-[(R)-S(8)-aminomethyldihydrolipoyl]-L-lysyl-[protein] + (6S)-5,6,7,8-tetrahydrofolate = N(6)-[(R)-dihydrolipoyl]-L-lysyl-[protein] + (6R)-5,10-methylene-5,6,7,8-tetrahydrofolate + NH4(+). The glycine cleavage system catalyzes the degradation of glycine. The protein is Aminomethyltransferase of Geobacillus kaustophilus (strain HTA426).